Consider the following 405-residue polypeptide: Putative arsenical pump-driving ATPase (405 aa).

8 to 15 (GKGGVGKT) is an ATP binding site.

Belongs to the arsA ATPase family.

It catalyses the reaction arsenite(in) + ATP + H2O = arsenite(out) + ADP + phosphate + H(+). Anion-transporting ATPase. Catalyzes the extrusion of arsenite. This is Putative arsenical pump-driving ATPase from Chlorobaculum tepidum (strain ATCC 49652 / DSM 12025 / NBRC 103806 / TLS) (Chlorobium tepidum).